The chain runs to 397 residues: t-SNARE affecting a late Golgi compartment protein 2 (397 aa).

The Cytoplasmic segment spans residues 1–317 (MFRDRTNLFL…HYQKRTQKCK (317 aa)). Residues 74-96 (DIAQDVDDYLLEVRRLSEQLAKV) are a coiled coil. A Phosphoserine modification is found at Ser109. One can recognise a t-SNARE coiled-coil homology domain in the interval 244-306 (EAYLRERDEE…KSADKELNKA (63 aa)). Residues 318–338 (VILLLTLCVIALFFFVMLKPH) traverse the membrane as a helical; Anchor for type IV membrane protein segment. The Vesicular segment spans residues 339–397 (GGGSGGRNNGSNKYNNDDNKTVNNSHDDGSNTHINDEESNLPSIVEVTESENDALDDLL). The disordered stretch occupies residues 341 to 397 (GSGGRNNGSNKYNNDDNKTVNNSHDDGSNTHINDEESNLPSIVEVTESENDALDDLL). A compositionally biased stretch (basic and acidic residues) spans 353 to 374 (NNDDNKTVNNSHDDGSNTHIND). The segment covering 386 to 397 (TESENDALDDLL) has biased composition (acidic residues).

This sequence belongs to the syntaxin family. Interacts with VPS45.

The protein resides in the golgi apparatus. It localises to the trans-Golgi network membrane. The protein localises to the endosome membrane. In terms of biological role, t-SNARE that functions in transport from the endosome to the late Golgi and on the endocytic pathway. The protein is t-SNARE affecting a late Golgi compartment protein 2 (TLG2) of Saccharomyces cerevisiae (strain ATCC 204508 / S288c) (Baker's yeast).